A 276-amino-acid polypeptide reads, in one-letter code: Small ribosomal subunit protein uS3 (276 aa).

The region spanning 39-110 (IRRETMKFLK…KINIKIKEIK (72 aa)) is the KH type-2 domain.

It belongs to the universal ribosomal protein uS3 family. Part of the 30S ribosomal subunit. Forms a tight complex with proteins S10 and S14.

Functionally, binds the lower part of the 30S subunit head. Binds mRNA in the 70S ribosome, positioning it for translation. The sequence is that of Small ribosomal subunit protein uS3 from Borrelia turicatae (strain 91E135).